Reading from the N-terminus, the 277-residue chain is Tryptophan synthase alpha chain (277 aa).

Residues Glu43 and Glu54 each act as proton acceptor in the active site.

Belongs to the TrpA family. Tetramer of two alpha and two beta chains.

It carries out the reaction (1S,2R)-1-C-(indol-3-yl)glycerol 3-phosphate + L-serine = D-glyceraldehyde 3-phosphate + L-tryptophan + H2O. It participates in amino-acid biosynthesis; L-tryptophan biosynthesis; L-tryptophan from chorismate: step 5/5. The alpha subunit is responsible for the aldol cleavage of indoleglycerol phosphate to indole and glyceraldehyde 3-phosphate. The protein is Tryptophan synthase alpha chain of Haloferax volcanii (strain ATCC 29605 / DSM 3757 / JCM 8879 / NBRC 14742 / NCIMB 2012 / VKM B-1768 / DS2) (Halobacterium volcanii).